The sequence spans 274 residues: MTHVEIRHAMDPVSARQLDTAGLREAFHMGDLFRSGEIRLVYTHYDRMIVGGAVPAGEPLVLDEVKPTGTASILDRREMGVVNVGAAGTVSAGGESWEMGRGDVLYLPMGAGPVTFAGEGRFYILSAPAHTAHPARLVKLEDAKKVKLGSPETANERTINQFIHPEVMQSCQLVVGYTQFHGGSVWNTMPAHVHDRRMEAYLYFDLAEEARVFHFMGEPSETRHLVMRNEEAVVSPPWSIHCGCGTGSYTFVWAMAGDNVDYRDVEMVAMEDLR.

The Zn(2+) site is built by His-192, His-194, Glu-199, and His-241.

The protein belongs to the KduI family. It depends on Zn(2+) as a cofactor.

It catalyses the reaction 5-dehydro-4-deoxy-D-glucuronate = 3-deoxy-D-glycero-2,5-hexodiulosonate. Its pathway is glycan metabolism; pectin degradation; 2-dehydro-3-deoxy-D-gluconate from pectin: step 4/5. Its function is as follows. Catalyzes the isomerization of 5-dehydro-4-deoxy-D-glucuronate to 3-deoxy-D-glycero-2,5-hexodiulosonate. This is 4-deoxy-L-threo-5-hexosulose-uronate ketol-isomerase from Cereibacter sphaeroides (strain ATCC 17029 / ATH 2.4.9) (Rhodobacter sphaeroides).